The primary structure comprises 426 residues: Zinc finger CCCH domain-containing protein 13 (426 aa).

A C3H1-type zinc finger spans residues 10-36; the sequence is AYKTKLCALWQRGNCNRDTCSFAHGHG. 3 disordered regions span residues 34 to 155, 253 to 317, and 390 to 426; these read GHGD…HEKQ, NEEG…DKTS, and NDADDKTRSPAIPLQPPPVVQNAYEQYEGDDEEVDVE. Composition is skewed to basic and acidic residues over residues 54–70, 78–101, and 108–120; these read RRDYRAGDFRGRIDRRF, PGRESRGHRPLYDRRPSSRERDSS, and RKSERRHEKKTDD. Positions 124-133 are enriched in low complexity; that stretch reads NSSRSLSLSD. A compositionally biased stretch (basic and acidic residues) spans 135–155; the sequence is NDEKKKDKFSSGDEKEDHEKQ. Positions 144–245 form a coiled coil; that stretch reads SSGDEKEDHE…FERLGDLLAS (102 aa). Residues 255-272 are compositionally biased toward polar residues; sequence EGSSVNEDLNERSPNTAA. Residues 284–317 are compositionally biased toward basic and acidic residues; it reads EEAKAVKKRRERDSDTMTRSDKYRSDVTDFDKTS. Positions 416-426 are enriched in acidic residues; sequence YEGDDEEVDVE.

This Oryza sativa subsp. japonica (Rice) protein is Zinc finger CCCH domain-containing protein 13.